The following is a 426-amino-acid chain: Serine--tRNA ligase (426 aa).

Position 233–235 (233–235 (TAE)) interacts with L-serine. ATP is bound at residue 264–266 (RSE). E287 provides a ligand contact to L-serine. 351-354 (EISS) is an ATP binding site. S387 lines the L-serine pocket.

It belongs to the class-II aminoacyl-tRNA synthetase family. Type-1 seryl-tRNA synthetase subfamily. In terms of assembly, homodimer. The tRNA molecule binds across the dimer.

The protein resides in the cytoplasm. The catalysed reaction is tRNA(Ser) + L-serine + ATP = L-seryl-tRNA(Ser) + AMP + diphosphate + H(+). It catalyses the reaction tRNA(Sec) + L-serine + ATP = L-seryl-tRNA(Sec) + AMP + diphosphate + H(+). The protein operates within aminoacyl-tRNA biosynthesis; selenocysteinyl-tRNA(Sec) biosynthesis; L-seryl-tRNA(Sec) from L-serine and tRNA(Sec): step 1/1. In terms of biological role, catalyzes the attachment of serine to tRNA(Ser). Is also able to aminoacylate tRNA(Sec) with serine, to form the misacylated tRNA L-seryl-tRNA(Sec), which will be further converted into selenocysteinyl-tRNA(Sec). The chain is Serine--tRNA ligase from Clostridium botulinum (strain Loch Maree / Type A3).